Consider the following 234-residue polypeptide: Ribose-5-phosphate isomerase A (234 aa).

Substrate-binding positions include 35–38 (SGTT), 91–94 (DGAD), and 105–108 (KGGG). E114 functions as the Proton acceptor in the catalytic mechanism. Substrate is bound at residue K132.

This sequence belongs to the ribose 5-phosphate isomerase family. As to quaternary structure, homodimer.

It carries out the reaction aldehydo-D-ribose 5-phosphate = D-ribulose 5-phosphate. The protein operates within carbohydrate degradation; pentose phosphate pathway; D-ribose 5-phosphate from D-ribulose 5-phosphate (non-oxidative stage): step 1/1. Catalyzes the reversible conversion of ribose-5-phosphate to ribulose 5-phosphate. This Methanococcus aeolicus (strain ATCC BAA-1280 / DSM 17508 / OCM 812 / Nankai-3) protein is Ribose-5-phosphate isomerase A.